Here is a 396-residue protein sequence, read N- to C-terminus: Elongation factor Tu (396 aa).

The tr-type G domain occupies 10-206 (KPHCNIGTIG…AVDAYIPQPE (197 aa)). Positions 19 to 26 (GHVDHGKT) are G1. 19–26 (GHVDHGKT) is a binding site for GTP. Residue Thr26 participates in Mg(2+) binding. Positions 60 to 64 (GITIS) are G2. The G3 stretch occupies residues 81 to 84 (DCPG). GTP-binding positions include 81–85 (DCPGH) and 136–139 (NKVD). The interval 136–139 (NKVD) is G4. The tract at residues 174-176 (SAL) is G5.

It belongs to the TRAFAC class translation factor GTPase superfamily. Classic translation factor GTPase family. EF-Tu/EF-1A subfamily. In terms of assembly, monomer.

Its subcellular location is the cytoplasm. It carries out the reaction GTP + H2O = GDP + phosphate + H(+). Its function is as follows. GTP hydrolase that promotes the GTP-dependent binding of aminoacyl-tRNA to the A-site of ribosomes during protein biosynthesis. The polypeptide is Elongation factor Tu (Gluconacetobacter diazotrophicus (strain ATCC 49037 / DSM 5601 / CCUG 37298 / CIP 103539 / LMG 7603 / PAl5)).